Reading from the N-terminus, the 323-residue chain is tRNA U34 carboxymethyltransferase (323 aa).

Carboxy-S-adenosyl-L-methionine contacts are provided by residues K91, W105, K110, G130, 152-154, 181-182, M196, Y200, and R315; these read DPT and IE.

The protein belongs to the class I-like SAM-binding methyltransferase superfamily. CmoB family. Homotetramer.

The catalysed reaction is carboxy-S-adenosyl-L-methionine + 5-hydroxyuridine(34) in tRNA = 5-carboxymethoxyuridine(34) in tRNA + S-adenosyl-L-homocysteine + H(+). Functionally, catalyzes carboxymethyl transfer from carboxy-S-adenosyl-L-methionine (Cx-SAM) to 5-hydroxyuridine (ho5U) to form 5-carboxymethoxyuridine (cmo5U) at position 34 in tRNAs. The chain is tRNA U34 carboxymethyltransferase from Escherichia coli O139:H28 (strain E24377A / ETEC).